A 374-amino-acid chain; its full sequence is tRNA-specific 2-thiouridylase MnmA (374 aa).

Residues 13–20 (GMSGGVDS) and methionine 39 each bind ATP. The tract at residues 99–101 (NPD) is interaction with target base in tRNA. Cysteine 104 serves as the catalytic Nucleophile. Cysteine 104 and cysteine 201 form a disulfide bridge. An ATP-binding site is contributed by glycine 128. The tract at residues 151–153 (KDQ) is interaction with tRNA. Cysteine 201 serves as the catalytic Cysteine persulfide intermediate. An interaction with tRNA region spans residues 313-314 (RY).

It belongs to the MnmA/TRMU family.

It is found in the cytoplasm. The enzyme catalyses S-sulfanyl-L-cysteinyl-[protein] + uridine(34) in tRNA + AH2 + ATP = 2-thiouridine(34) in tRNA + L-cysteinyl-[protein] + A + AMP + diphosphate + H(+). Its function is as follows. Catalyzes the 2-thiolation of uridine at the wobble position (U34) of tRNA, leading to the formation of s(2)U34. The protein is tRNA-specific 2-thiouridylase MnmA of Streptococcus equi subsp. zooepidemicus (strain MGCS10565).